The primary structure comprises 590 residues: L-fucose isomerase (590 aa).

Residues E337 and D361 each act as proton acceptor in the active site. Residues E337, D361, and H528 each contribute to the Mn(2+) site.

The protein belongs to the L-fucose isomerase family. Mn(2+) serves as cofactor.

The protein resides in the cytoplasm. The catalysed reaction is L-fucose = L-fuculose. Its pathway is carbohydrate degradation; L-fucose degradation; L-lactaldehyde and glycerone phosphate from L-fucose: step 1/3. Converts the aldose L-fucose into the corresponding ketose L-fuculose. The sequence is that of L-fucose isomerase from Bacteroides fragilis (strain YCH46).